Here is a 392-residue protein sequence, read N- to C-terminus: L-rhamnonate dehydratase (392 aa).

His-22 and Arg-48 together coordinate substrate. Residues Asp-214, Glu-240, and Glu-268 each contribute to the Mg(2+) site. Catalysis depends on His-318, which acts as the Proton acceptor. Glu-338 contributes to the substrate binding site.

This sequence belongs to the mandelate racemase/muconate lactonizing enzyme family. RhamD subfamily. Homooctamer; tetramer of dimers. Mg(2+) is required as a cofactor.

It carries out the reaction L-rhamnonate = 2-dehydro-3-deoxy-L-rhamnonate + H2O. Catalyzes the dehydration of L-rhamnonate to 2-keto-3-deoxy-L-rhamnonate (KDR). In Burkholderia orbicola (strain MC0-3), this protein is L-rhamnonate dehydratase.